A 252-amino-acid chain; its full sequence is 5'-nucleotidase SurE (252 aa).

D8, D9, S39, and N91 together coordinate a divalent metal cation.

The protein belongs to the SurE nucleotidase family. The cofactor is a divalent metal cation.

The protein localises to the cytoplasm. It carries out the reaction a ribonucleoside 5'-phosphate + H2O = a ribonucleoside + phosphate. In terms of biological role, nucleotidase that shows phosphatase activity on nucleoside 5'-monophosphates. This is 5'-nucleotidase SurE from Bordetella pertussis (strain Tohama I / ATCC BAA-589 / NCTC 13251).